Here is a 361-residue protein sequence, read N- to C-terminus: Peptide chain release factor 1 (361 aa).

Q235 carries the post-translational modification N5-methylglutamine.

The protein belongs to the prokaryotic/mitochondrial release factor family. Post-translationally, methylated by PrmC. Methylation increases the termination efficiency of RF1.

Its subcellular location is the cytoplasm. Functionally, peptide chain release factor 1 directs the termination of translation in response to the peptide chain termination codons UAG and UAA. The polypeptide is Peptide chain release factor 1 (Xanthomonas campestris pv. campestris (strain 8004)).